The chain runs to 377 residues: Cytochrome b (377 aa).

A run of 4 helical transmembrane segments spans residues 36–56 (WGSLLGIFLIIPIITGLFLAM), 80–102 (WLIRFIHVNGASFFFIFLYLHMA), 115–135 (VWLIGCTIYVVSMATAFMGYI), and 181–201 (FFVLHFILPFIILALSIIHLI). Residues H86 and H100 each coordinate heme b. The heme b site is built by H185 and H199. H204 serves as a coordination point for a ubiquinone. Transmembrane regions (helical) follow at residues 227 to 247 (YSSKDLMFLLLLMMIMMVIIF), 291 to 311 (LGGVLTMVFSILILFLLPFIS), 326 to 346 (LFWSFVVNMLILTWIGGMPVV), and 354 to 374 (LTSTFLYFIIILIYSNSFLMI).

The protein belongs to the cytochrome b family. As to quaternary structure, the main subunits of complex b-c1 are: cytochrome b, cytochrome c1 and the Rieske protein. The cofactor is heme b.

The protein resides in the mitochondrion inner membrane. Functionally, component of the ubiquinol-cytochrome c reductase complex (complex III or cytochrome b-c1 complex) that is part of the mitochondrial respiratory chain. The b-c1 complex mediates electron transfer from ubiquinol to cytochrome c. Contributes to the generation of a proton gradient across the mitochondrial membrane that is then used for ATP synthesis. The sequence is that of Cytochrome b (mt:Cyt-b) from Myzostoma seymourcollegiorum (Polychaete worm).